The sequence spans 230 residues: MSRLPSLSSLCLAIACSALLGGCVAAGDVRPFAELAPIVPVVAPVAQPTAGAIYAAGPSLNLYGDRRARDVGDLLTVNLVENTTASSTANTSISKADTVDMSTPTLLGVPLTVNGIDVLRNSTSGDRSFDGKGNTAQSNRMQGSVTVTVMQRLPNGNLVIQGQKNLRLTQGDELVQVQGIVRAADIAPDNSVPSSKVADARIAYGGRGAIAQSNAMGWLSRFFNSRLSPY.

The N-terminal stretch at Met-1–Ala-15 is a signal peptide. Residue Cys-16 is the site of N-palmitoyl cysteine attachment. Cys-16 carries the S-diacylglycerol cysteine lipid modification.

It belongs to the FlgH family. The basal body constitutes a major portion of the flagellar organelle and consists of four rings (L,P,S, and M) mounted on a central rod.

It is found in the cell outer membrane. The protein resides in the bacterial flagellum basal body. Assembles around the rod to form the L-ring and probably protects the motor/basal body from shearing forces during rotation. The chain is Flagellar L-ring protein from Xanthomonas campestris pv. campestris (strain 8004).